A 278-amino-acid polypeptide reads, in one-letter code: Elongation factor Ts 2, mitochondrial (278 aa).

It belongs to the EF-Ts family.

The protein localises to the mitochondrion. Its function is as follows. Associates with the EF-Tu.GDP complex and induces the exchange of GDP to GTP. It remains bound to the aminoacyl-tRNA.EF-Tu.GTP complex up to the GTP hydrolysis stage on the ribosome. The chain is Elongation factor Ts 2, mitochondrial from Trypanosoma cruzi (strain CL Brener).